The primary structure comprises 201 residues: uncharacterized protein (201 aa).

Positions 1–19 are cleaved as a signal peptide; that stretch reads MKLIVSVFLIGCQFLNILG.

This is an uncharacterized protein from Acheta domesticus (House cricket).